The chain runs to 357 residues: Maleylacetate reductase 1 (357 aa).

This sequence belongs to the iron-containing alcohol dehydrogenase family.

It carries out the reaction 3-oxoadipate + NAD(+) = maleylacetate + NADH + H(+). The catalysed reaction is 3-oxoadipate + NADP(+) = maleylacetate + NADPH + H(+). The protein operates within aromatic compound metabolism; 3-chlorocatechol degradation. Its function is as follows. Plays a major role in the degradation of chloroaromatic compounds by channeling maleylacetate and some of its substituted derivatives into the 3-oxoadipate pathway. This enzyme converts maleylacetate and 2-chloromaleylacetate with similar efficiencies. This is Maleylacetate reductase 1 (macA) from Rhodococcus opacus (Nocardia opaca).